Reading from the N-terminus, the 519-residue chain is MLTAQRSRIRCREITGPAHSVALKARPPLSRDIDDIFVRRRKQEATRGEVLEFTKDQSSCDVRMRWERNTQRRVVSATVNRHLQDALDQYQMGIDEKRERLRELLESEELELFKEMEAKKETVLERQAKMHERAKTLRERRESERQRVVADKLDQLFREQSEELRAVQIKRRQDQVCTERESQIRTKEEVRRVQEEEEKLFAQMWESDRLAKEERHNLELQRQRENNLQQKAVLQTQMDMAEQQRIQAKELKQEEAQLLKDQREMLRLEAEREHRQKLQDQEKRRKQLDLSLRLKMKRLTRDRQEELALDMSILEQLLAQEKDEKQDEVLKKLERQEEQRRYREYLSQQLEEQKRLEAETEQLFESELQQAWARREAQWRLEKTARDRLMKDVMDTLRLQIQEKLNENMQKQAEAFKEKEELDRIIQANKLLDEEEKAHFREATKEYQADLLAQMMYRQRIREAEEAEKEYEFQKGLMYEEQYNKKIQDILSRPISSTTAVHPFRRRDRRCSSSGGQMS.

Coiled-coil stretches lie at residues 80–107 (NRHL…LLES) and 210–339 (LAKE…QEEQ). Residues 498–519 (TTAVHPFRRRDRRCSSSGGQMS) form a disordered region.

Belongs to the CFAP53 family.

The protein localises to the cytoplasm. The protein resides in the cytoskeleton. It is found in the cilium axoneme. Its subcellular location is the cilium basal body. Its function is as follows. Microtubule inner protein (MIP) part of the dynein-decorated doublet microtubules (DMTs) in cilia axoneme, which is required for motile cilia beating. Regulates motility patterns of both 9+0 and 9+2 motile cilia through differential localization and recruitment of axonemal dynein components. Required for cilium motility within the spinal canal and Kuppfer's vesicle and is involved in the establishment of left-right symmetry during embryogenesis. The polypeptide is Cilia- and flagella-associated protein 53 (Danio rerio (Zebrafish)).